The sequence spans 106 residues: Urease subunit beta (106 aa).

The protein belongs to the urease beta subunit family. As to quaternary structure, heterotrimer of UreA (gamma), UreB (beta) and UreC (alpha) subunits. Three heterotrimers associate to form the active enzyme.

Its subcellular location is the cytoplasm. The catalysed reaction is urea + 2 H2O + H(+) = hydrogencarbonate + 2 NH4(+). It functions in the pathway nitrogen metabolism; urea degradation; CO(2) and NH(3) from urea (urease route): step 1/1. This chain is Urease subunit beta, found in Prochlorococcus marinus (strain MIT 9301).